The primary structure comprises 452 residues: Ribosomal L1 domain-containing protein 1 (452 aa).

N-acetylmethionine is present on Met1. Glycyl lysine isopeptide (Lys-Gly) (interchain with G-Cter in SUMO2) cross-links involve residues Lys119 and Lys253. A coiled-coil region spans residues 277-350 (LRSLRKQELK…QKVTEECEEA (74 aa)). The segment at 283–452 (QELKKRKREN…DKKTKAAHSN (170 aa)) is disordered. A compositionally biased stretch (basic and acidic residues) spans 292 to 301 (NAKLKKESKM). A compositionally biased stretch (polar residues) spans 309 to 319 (ATSLLTQSGLA). Positions 330–341 (QKKKTNKAHKKQ) are enriched in basic residues. Phosphothreonine is present on residues Thr334, Thr344, Thr360, Thr399, and Thr407. Over residues 414–423 (KDVQEFRKPE) the composition is skewed to basic and acidic residues. Positions 425 to 440 (SSFSTPRKSGKKASNT) are enriched in polar residues. At Thr429 the chain carries Phosphothreonine. Lys432 is modified (N6-acetyllysine). Phosphoserine is present on Ser433.

The protein belongs to the universal ribosomal protein uL1 family. Highly divergent. Interacts with ING1. Interacts with KPNA7 and KPNA2.

Its subcellular location is the nucleus. It is found in the nucleolus. Its function is as follows. Regulates cellular senescence through inhibition of PTEN translation. Acts as a pro-apoptotic regulator in response to DNA damage. This is Ribosomal L1 domain-containing protein 1 from Mus musculus (Mouse).